Here is a 377-residue protein sequence, read N- to C-terminus: Modification methylase CviBIII (377 aa).

It belongs to the N(4)/N(6)-methyltransferase family.

It catalyses the reaction a 2'-deoxyadenosine in DNA + S-adenosyl-L-methionine = an N(6)-methyl-2'-deoxyadenosine in DNA + S-adenosyl-L-homocysteine + H(+). Its function is as follows. A gamma subtype methylase that recognizes the double-stranded sequence 5'-TCGA-3' and methylates A-4 on both strands. This Paramecium bursaria Chlorella virus NC1A (PBCV-NC1A) protein is Modification methylase CviBIII (CVIBIIIM).